A 596-amino-acid polypeptide reads, in one-letter code: Succinate dehydrogenase flavoprotein subunit (596 aa).

FAD-binding positions include 18–23, 41–56, and Asp-225; these read GAGGAG and SKLFPTRSHTVAAQGG. His-49 carries the tele-8alpha-FAD histidine modification. His-246 and Thr-258 together coordinate substrate. The active-site Proton acceptor is Arg-290. His-357 is a binding site for substrate. Residue Glu-391 participates in FAD binding. Substrate is bound at residue Arg-402. 407 to 408 serves as a coordination point for FAD; the sequence is SL.

It belongs to the FAD-dependent oxidoreductase 2 family. FRD/SDH subfamily. As to quaternary structure, part of an enzyme complex containing four subunits: a flavoprotein, an iron-sulfur, cytochrome b-556, and a hydrophobic anchor protein. FAD serves as cofactor.

The protein localises to the cell inner membrane. It carries out the reaction a quinone + succinate = fumarate + a quinol. It participates in carbohydrate metabolism; tricarboxylic acid cycle; fumarate from succinate (bacterial route): step 1/1. This Rickettsia bellii (strain RML369-C) protein is Succinate dehydrogenase flavoprotein subunit (sdhA).